Consider the following 257-residue polypeptide: Snake venom serine protease KN10 (257 aa).

A signal peptide spans 1 to 18; the sequence is MVLIRVLANLLILQLSYA. Residues 19-24 constitute a propeptide that is removed on maturation; sequence QKSSEL. The Peptidase S1 domain occupies 25 to 248; the sequence is VVGGDECNIN…HLDWIKSIIA (224 aa). Cystine bridges form between Cys31–Cys162, Cys49–Cys65, Cys141–Cys209, Cys173–Cys188, and Cys199–Cys224. The active-site Charge relay system is His64. The N-linked (GlcNAc...) asparagine glycan is linked to Asn102. Asp109 serves as the catalytic Charge relay system. 2 N-linked (GlcNAc...) asparagine glycosylation sites follow: Asn120 and Asn121. The Charge relay system role is filled by Ser203.

This sequence belongs to the peptidase S1 family. Snake venom subfamily. As to quaternary structure, monomer. As to expression, expressed by the venom gland.

Its subcellular location is the secreted. In terms of biological role, snake venom serine protease that may act in the hemostasis system of the prey. The protein is Snake venom serine protease KN10 of Trimeresurus stejnegeri (Chinese green tree viper).